Here is a 517-residue protein sequence, read N- to C-terminus: Crotonobetaine/carnitine--CoA ligase (517 aa).

The protein belongs to the ATP-dependent AMP-binding enzyme family.

The catalysed reaction is 4-(trimethylamino)butanoate + ATP + CoA = 4-(trimethylamino)butanoyl-CoA + AMP + diphosphate. It carries out the reaction crotonobetaine + ATP + CoA = crotonobetainyl-CoA + AMP + diphosphate. It catalyses the reaction (R)-carnitine + ATP + CoA = (R)-carnitinyl-CoA + AMP + diphosphate. It participates in amine and polyamine metabolism; carnitine metabolism. Catalyzes the transfer of CoA to carnitine, generating the initial carnitinyl-CoA needed for the CaiB reaction cycle. Also has activity toward crotonobetaine and gamma-butyrobetaine. The chain is Crotonobetaine/carnitine--CoA ligase from Escherichia coli O8 (strain IAI1).